The sequence spans 374 residues: MQELFNNLMELCKDSQRKFFYSDDVSASGRTYRIFSYNYASYSDWLLPDALECRGIMFEMDGEKPVRIASRPMEKFFNLNENPFTMNIDLNDVDYILTKEDGSLVSTYLDGDEILFKSKGSIKSEQALMANGILMNINHHRLRDRLKELAEDGFTANFEFVAPTNRIVLAYQEMKIILLNVRENETGEYISYDDIYKDATLRPYLVERYEIDSPKWIEEAKNAENIEGYVAVMKDGSHFKIKSDWYVSLHSTKSSLDNPEKLFKTIIDGASDDLKAMYADDEYSYRKIEAFETTYLKYLDRALFLVLDCHNKHCGKDRKTYAMEAQGVAKGAGMDHLFGIIMSLYQGYDSQEKVMCEIEQNFLKNYKKFIPEGY.

Positions 37, 54, and 75 each coordinate ATP. Lysine 99 acts as the N6-AMP-lysine intermediate in catalysis. ATP is bound by residues glutamate 159, lysine 240, and lysine 242. Position 272 (aspartate 272) interacts with Mg(2+).

The protein belongs to the Tequatrovirus RNA ligase 1 family. Requires Mg(2+) as cofactor.

It carries out the reaction ATP + (ribonucleotide)n-3'-hydroxyl + 5'-phospho-(ribonucleotide)m = (ribonucleotide)n+m + AMP + diphosphate.. In terms of biological role, involved in countering a host defense mechanism which, following viral infection, activates the host anticodon nuclease and shuts off viral translation. Repairs 5'-PO4 and 3'-OH groups in the cleaved host tRNA. The nick ligation reaction entails three nucleotidyl transfer steps. In the first step, the RNA ligase reacts with ATP in the absence of nucleic acid to form a covalent ligase-AMP intermediate and release pyrophosphate. In step 2, the ligase-AMP binds to the nicked duplex nucleic acid and transfers the adenylate to the 5'-PO4 terminus to form an adenylylated nicked intermediate. In step 3, the RNA ligase directs the attack of the nick 3'-OH on the 5'-phosphoanhydride linkage, resulting in a repaired 3'-5' phosphodiester and release of AMP. In Enterobacteria phage T4 (Bacteriophage T4), this protein is RNA ligase 1 (63).